The sequence spans 428 residues: Glutamate-1-semialdehyde 2,1-aminomutase (428 aa).

At lysine 265 the chain carries N6-(pyridoxal phosphate)lysine.

The protein belongs to the class-III pyridoxal-phosphate-dependent aminotransferase family. HemL subfamily. Homodimer. It depends on pyridoxal 5'-phosphate as a cofactor.

The protein resides in the cytoplasm. It catalyses the reaction (S)-4-amino-5-oxopentanoate = 5-aminolevulinate. The protein operates within porphyrin-containing compound metabolism; protoporphyrin-IX biosynthesis; 5-aminolevulinate from L-glutamyl-tRNA(Glu): step 2/2. This Thioalkalivibrio sulfidiphilus (strain HL-EbGR7) protein is Glutamate-1-semialdehyde 2,1-aminomutase.